The primary structure comprises 352 residues: Heat-inducible transcription repressor HrcA (352 aa).

The protein belongs to the HrcA family.

Functionally, negative regulator of class I heat shock genes (grpE-dnaK-dnaJ and groELS operons). Prevents heat-shock induction of these operons. This Ralstonia nicotianae (strain ATCC BAA-1114 / GMI1000) (Ralstonia solanacearum) protein is Heat-inducible transcription repressor HrcA.